The sequence spans 638 residues: MGQDQSSVFDLAAVAAASNGGNNDPLLPPARFIGDPQKPSRMPYNKYASYSEQIPFDYPERTWPGKRLQRAPRWCSVDLRDGNQALVNPMDSERKLRFWNLLVSMGFKEIEVGFPSASETDFDFIRMLIERELIPDDVTIVVLTQCREHLIRRTYEALKGAKRAIVHFYNSVSVLQREVVFRKNKEEIKKLATDAAELCKDLENEAKGIDLYYEYSPESFTGTEPEYAVEVCNAVIGVIKPTPEHPMIINLPATVEMTTPNVFADEVEYVSTHLDDRDSVVLSLHPHNDEGMGVAATELAVLAGADRVEGCLLGNGERTGNVDLVTLGLNWLTQGIDPQLDLSNVPEIRKTVEYCNQIKISERHPYAGNFVFTAFSGSHQDAIKKGLEARQVAAERAGADLDSFVWLVPYLPIDPKDIGRTYEAIIRVNSQSGKGGMAYLLKTNHNLDLPKRLQIEFDKIVQNYADTTKKEVKDGDIWRLFKDEYLPVEQSGMTAAGVVVGDTHDASLEPWGRLKLLKVAVSSGEDGSDTVLKARLLDRGVNVGDDEPVEREASGIGNGPIAAFLNAISNFGVEASIMDYVEHTMSVGTDAMAASYVECQIGEADDAQIVWGVGIDSSITTSALKAIISAINRSQRQR.

In terms of domain architecture, Pyruvate carboxyltransferase spans 72 to 346; that stretch reads PRWCSVDLRD…DPQLDLSNVP (275 aa). Asp-81, His-285, His-287, and Asn-321 together coordinate Mg(2+). The regulatory domain stretch occupies residues 488-638; that stretch reads VEQSGMTAAG…SAINRSQRQR (151 aa).

This sequence belongs to the alpha-IPM synthase/homocitrate synthase family. LeuA type 2 subfamily. As to quaternary structure, homodimer. Mg(2+) serves as cofactor.

Its subcellular location is the cytoplasm. It catalyses the reaction 3-methyl-2-oxobutanoate + acetyl-CoA + H2O = (2S)-2-isopropylmalate + CoA + H(+). Its pathway is amino-acid biosynthesis; L-leucine biosynthesis; L-leucine from 3-methyl-2-oxobutanoate: step 1/4. Catalyzes the condensation of the acetyl group of acetyl-CoA with 3-methyl-2-oxobutanoate (2-ketoisovalerate) to form 3-carboxy-3-hydroxy-4-methylpentanoate (2-isopropylmalate). This is 2-isopropylmalate synthase from Bifidobacterium longum subsp. infantis (strain ATCC 15697 / DSM 20088 / JCM 1222 / NCTC 11817 / S12).